We begin with the raw amino-acid sequence, 297 residues long: Large ribosomal subunit protein uL15m (297 aa).

Residues 1–21 constitute a mitochondrion transit peptide; sequence MSGNGVHGVHGALQLLRSLPK. Residues 23 to 69 are disordered; it reads SLANLRPNPGSKKPERRRGRGRYRGRKCGRGHKGERQRGNRPRLGFE. Residues 36–53 show a composition bias toward basic residues; the sequence is PERRRGRGRYRGRKCGRG.

This sequence belongs to the universal ribosomal protein uL15 family. In terms of assembly, component of the mitochondrial ribosome large subunit (39S) which comprises a 16S rRNA and about 50 distinct proteins.

The protein resides in the mitochondrion. The polypeptide is Large ribosomal subunit protein uL15m (MRPL15) (Gallus gallus (Chicken)).